Consider the following 97-residue polypeptide: Co-chaperonin GroES (97 aa).

This sequence belongs to the GroES chaperonin family. Heptamer of 7 subunits arranged in a ring. Interacts with the chaperonin GroEL.

The protein resides in the cytoplasm. In terms of biological role, together with the chaperonin GroEL, plays an essential role in assisting protein folding. The GroEL-GroES system forms a nano-cage that allows encapsulation of the non-native substrate proteins and provides a physical environment optimized to promote and accelerate protein folding. GroES binds to the apical surface of the GroEL ring, thereby capping the opening of the GroEL channel. The sequence is that of Co-chaperonin GroES from Arthrobacter sp. (strain FB24).